The primary structure comprises 440 residues: NADH-quinone oxidoreductase subunit H (440 aa).

The next 9 helical transmembrane spans lie at 11-31 (VWLI…WTIF), 83-103 (IVFN…WSVI), 123-143 (VPVA…GVVL), 164-184 (MISY…FSGS), 207-227 (IAGH…ITMF), 261-281 (FLAE…LFLG), 299-319 (WWGL…FVWV), 331-351 (FMDL…LLVA), and 366-386 (VFLV…FMGG).

The protein belongs to the complex I subunit 1 family. NDH-1 is composed of 14 different subunits. Subunits NuoA, H, J, K, L, M, N constitute the membrane sector of the complex.

The protein resides in the cell membrane. The catalysed reaction is a quinone + NADH + 5 H(+)(in) = a quinol + NAD(+) + 4 H(+)(out). NDH-1 shuttles electrons from NADH, via FMN and iron-sulfur (Fe-S) centers, to quinones in the respiratory chain. The immediate electron acceptor for the enzyme in this species is believed to be ubiquinone. Couples the redox reaction to proton translocation (for every two electrons transferred, four hydrogen ions are translocated across the cytoplasmic membrane), and thus conserves the redox energy in a proton gradient. This subunit may bind ubiquinone. This is NADH-quinone oxidoreductase subunit H from Cutibacterium acnes (strain DSM 16379 / KPA171202) (Propionibacterium acnes).